The primary structure comprises 30 residues: Cyclotide mela-5 (30 aa).

Positions glycine 1–aspartate 30 form a cross-link, cyclopeptide (Gly-Asp). Disulfide bonds link cysteine 6/cysteine 20, cysteine 10/cysteine 22, and cysteine 15/cysteine 27.

Post-translationally, this is a cyclic peptide. In terms of processing, contains 3 disulfide bonds.

Its function is as follows. Probably participates in a plant defense mechanism (Potential). Binds to and induces leakage in phospholipd membranes, particularly ones containing 1-palmitoyl-2-oleophosphatidylethanolamine (POPE). This is Cyclotide mela-5 from Melicytus latifolius (Norfolk Island mahoe).